The sequence spans 102 residues: Large ribosomal subunit protein bL21 (102 aa).

This sequence belongs to the bacterial ribosomal protein bL21 family. As to quaternary structure, part of the 50S ribosomal subunit. Contacts protein L20.

In terms of biological role, this protein binds to 23S rRNA in the presence of protein L20. In Levilactobacillus brevis (strain ATCC 367 / BCRC 12310 / CIP 105137 / JCM 1170 / LMG 11437 / NCIMB 947 / NCTC 947) (Lactobacillus brevis), this protein is Large ribosomal subunit protein bL21.